A 475-amino-acid chain; its full sequence is Trifunctional enzyme subunit beta, mitochondrial (475 aa).

The transit peptide at 1–34 (MTTILTCPFKKLPTTSKWALRFAIRPLSCSSQLR) directs the protein to the mitochondrion. Lysine 73 bears the N6-acetyllysine; alternate mark. Lysine 73 carries the N6-succinyllysine; alternate modification. Residue cysteine 139 is the Acyl-thioester intermediate of the active site. The stretch at 174-221 (IRHSRKMRKLMLDLNKAKSMGQRLSLISKFRLNFLAPELPAVAEFSTS) is an intramembrane region. Residue lysine 189 is modified to N6-acetyllysine; alternate. Lysine 189 is modified (N6-succinyllysine; alternate). Residues lysine 191, lysine 273, and lysine 292 each carry the N6-succinyllysine modification. Lysine 294 bears the N6-acetyllysine; alternate mark. Lysine 294 carries the N6-succinyllysine; alternate modification. At lysine 299 the chain carries N6-acetyllysine. The residue at position 333 (lysine 333) is an N6-acetyllysine; alternate. The residue at position 333 (lysine 333) is an N6-succinyllysine; alternate. Residues lysine 349 and lysine 362 each carry the N6-acetyllysine modification. Cysteine 459 (proton donor/acceptor) is an active-site residue.

Belongs to the thiolase-like superfamily. Thiolase family. Heterotetramer of 2 alpha/HADHA and 2 beta/HADHB subunits; forms the mitochondrial trifunctional enzyme. Also purified as higher order heterooligomers including a 4 alpha/HADHA and 4 beta/HADHB heterooligomer which physiological significance remains unclear. The mitochondrial trifunctional enzyme interacts with MTLN. Interacts with RSAD2/viperin.

It localises to the mitochondrion. The protein localises to the mitochondrion inner membrane. Its subcellular location is the mitochondrion outer membrane. It is found in the endoplasmic reticulum. It carries out the reaction an acyl-CoA + acetyl-CoA = a 3-oxoacyl-CoA + CoA. It catalyses the reaction butanoyl-CoA + acetyl-CoA = 3-oxohexanoyl-CoA + CoA. The catalysed reaction is hexanoyl-CoA + acetyl-CoA = 3-oxooctanoyl-CoA + CoA. The enzyme catalyses octanoyl-CoA + acetyl-CoA = 3-oxodecanoyl-CoA + CoA. It carries out the reaction decanoyl-CoA + acetyl-CoA = 3-oxododecanoyl-CoA + CoA. It catalyses the reaction dodecanoyl-CoA + acetyl-CoA = 3-oxotetradecanoyl-CoA + CoA. The catalysed reaction is tetradecanoyl-CoA + acetyl-CoA = 3-oxohexadecanoyl-CoA + CoA. It functions in the pathway lipid metabolism; fatty acid beta-oxidation. Mitochondrial trifunctional enzyme catalyzes the last three of the four reactions of the mitochondrial beta-oxidation pathway. The mitochondrial beta-oxidation pathway is the major energy-producing process in tissues and is performed through four consecutive reactions breaking down fatty acids into acetyl-CoA. Among the enzymes involved in this pathway, the trifunctional enzyme exhibits specificity for long-chain fatty acids. Mitochondrial trifunctional enzyme is a heterotetrameric complex composed of two proteins, the trifunctional enzyme subunit alpha/HADHA carries the 2,3-enoyl-CoA hydratase and the 3-hydroxyacyl-CoA dehydrogenase activities, while the trifunctional enzyme subunit beta/HADHB described here bears the 3-ketoacyl-CoA thiolase activity. This is Trifunctional enzyme subunit beta, mitochondrial (HADHB) from Macaca fascicularis (Crab-eating macaque).